A 412-amino-acid chain; its full sequence is [Pyruvate dehydrogenase (acetyl-transferring)] kinase isozyme 4, mitochondrial (412 aa).

The Histidine kinase domain occupies I138–S368. ATP is bound by residues E254 to R261, D293, S312 to T313, and G329 to L334.

Belongs to the PDK/BCKDK protein kinase family. In terms of assembly, homodimer. Interacts with the pyruvate dehydrogenase complex subunit DLAT, and is part of the multimeric pyruvate dehydrogenase complex that contains multiple copies of pyruvate dehydrogenase (E1), dihydrolipoamide acetyltransferase (DLAT, E2) and lipoamide dehydrogenase (DLD, E3). In terms of tissue distribution, ubiquitous; highest levels of expression in heart and skeletal muscle.

Its subcellular location is the mitochondrion matrix. It catalyses the reaction L-seryl-[pyruvate dehydrogenase E1 alpha subunit] + ATP = O-phospho-L-seryl-[pyruvate dehydrogenase E1 alpha subunit] + ADP + H(+). In terms of biological role, kinase that plays a key role in regulation of glucose and fatty acid metabolism and homeostasis via phosphorylation of the pyruvate dehydrogenase subunits PDHA1 and PDHA2. This inhibits pyruvate dehydrogenase activity, and thereby regulates metabolite flux through the tricarboxylic acid cycle, down-regulates aerobic respiration and inhibits the formation of acetyl-coenzyme A from pyruvate. Inhibition of pyruvate dehydrogenase decreases glucose utilization and increases fat metabolism in response to prolonged fasting and starvation. Plays an important role in maintaining normal blood glucose levels under starvation, and is involved in the insulin signaling cascade. Via its regulation of pyruvate dehydrogenase activity, plays an important role in maintaining normal blood pH and in preventing the accumulation of ketone bodies under starvation. In the fed state, mediates cellular responses to glucose levels and to a high-fat diet. Regulates both fatty acid oxidation and de novo fatty acid biosynthesis. Plays a role in the generation of reactive oxygen species. Protects detached epithelial cells against anoikis. Plays a role in cell proliferation via its role in regulating carbohydrate and fatty acid metabolism. This is [Pyruvate dehydrogenase (acetyl-transferring)] kinase isozyme 4, mitochondrial (Pdk4) from Rattus norvegicus (Rat).